We begin with the raw amino-acid sequence, 344 residues long: S-methyl-5'-thioadenosine phosphorylase (344 aa).

Phosphate is bound by residues threonine 51, 99 to 100, and 132 to 133; these read RH and SA. Residue methionine 234 participates in substrate binding. A phosphate-binding site is contributed by serine 235. 258–260 lines the substrate pocket; that stretch reads DYD.

This sequence belongs to the PNP/MTAP phosphorylase family. MTAP subfamily. Homotrimer.

It is found in the cytoplasm. The protein resides in the nucleus. The enzyme catalyses S-methyl-5'-thioadenosine + phosphate = 5-(methylsulfanyl)-alpha-D-ribose 1-phosphate + adenine. The protein operates within amino-acid biosynthesis; L-methionine biosynthesis via salvage pathway; S-methyl-5-thio-alpha-D-ribose 1-phosphate from S-methyl-5'-thioadenosine (phosphorylase route): step 1/1. Catalyzes the reversible phosphorylation of S-methyl-5'-thioadenosine (MTA) to adenine and 5-methylthioribose-1-phosphate. Involved in the breakdown of MTA, a major by-product of polyamine biosynthesis. Responsible for the first step in the methionine salvage pathway after MTA has been generated from S-adenosylmethionine. Has broad substrate specificity with 6-aminopurine nucleosides as preferred substrates. The sequence is that of S-methyl-5'-thioadenosine phosphorylase from Phaeosphaeria nodorum (strain SN15 / ATCC MYA-4574 / FGSC 10173) (Glume blotch fungus).